The primary structure comprises 59 residues: Gonadotropin-releasing hormone receptor (59 aa).

Topologically, residues 1 to 2 (VA) are cytoplasmic. Residues 3 to 23 (FATSFTVCWTPYYVLGIWYWF) form a helical membrane-spanning segment. Residues 24 to 37 (DPEMLNRVSDPVNH) lie on the Extracellular side of the membrane. A helical transmembrane segment spans residues 38–58 (FFFLFAFLNPCFDPLIYGYFS). Residue Leu59 is a topological domain, cytoplasmic.

It belongs to the G-protein coupled receptor 1 family.

The protein resides in the cell membrane. In terms of biological role, receptor for gonadotropin releasing hormone (GnRH) that mediates the action of GnRH to stimulate the secretion of the gonadotropic hormones luteinizing hormone (LH) and follicle-stimulating hormone (FSH). This receptor mediates its action by association with G-proteins that activate a phosphatidylinositol-calcium second messenger system. The chain is Gonadotropin-releasing hormone receptor (GNRHR) from Macaca mulatta (Rhesus macaque).